The sequence spans 309 residues: Tagatose-6-phosphate kinase (309 aa).

Belongs to the carbohydrate kinase PfkB family. LacC subfamily.

It carries out the reaction D-tagatofuranose 6-phosphate + ATP = D-tagatofuranose 1,6-bisphosphate + ADP + H(+). It functions in the pathway carbohydrate metabolism; D-tagatose 6-phosphate degradation; D-glyceraldehyde 3-phosphate and glycerone phosphate from D-tagatose 6-phosphate: step 1/2. The chain is Tagatose-6-phosphate kinase from Streptococcus pyogenes serotype M2 (strain MGAS10270).